Reading from the N-terminus, the 323-residue chain is Magnesium transporter NIPA1 (323 aa).

Over 1 to 21 the chain is Extracellular; that stretch reads MGTAAAAAAAGEGARGPSPAA. A helical membrane pass occupies residues 22-42; it reads VSLGLGVAVVSSLVNGSTFVL. Residues 43–60 are Cytoplasmic-facing; that stretch reads QKKGIVRAKRRGTSYLTD. The chain crosses the membrane as a helical span at residues 61-81; the sequence is IVWWAGTIAMAVGQIGNFLAY. Position 82 (Thr82) is a topological domain, extracellular. Residues 83-103 form a helical membrane-spanning segment; it reads AVPTVLVTPLGALGVPFGSIL. Topologically, residues 104 to 111 are cytoplasmic; it reads ASYLLKEK. The chain crosses the membrane as a helical span at residues 112-132; it reads LNILGKLGCLLSCAGSVVLII. The Extracellular segment spans residues 133–153; the sequence is HSPKSESVTTQAELEEKLTNP. A helical membrane pass occupies residues 154-174; sequence VFVGYLCIVLLMLLLLIFWIA. Residues 175–177 are Cytoplasmic-facing; sequence PAH. Residues 178–198 form a helical membrane-spanning segment; that stretch reads GPTNIMVYISICSLLGSFTVP. Over 199 to 218 the chain is Extracellular; sequence STKGIGLAAQDILHNNPSSQ. Residues 219 to 239 traverse the membrane as a helical segment; the sequence is RALCLCLVLLAVLGCSIIVQF. The Cytoplasmic segment spans residues 240–253; it reads RYINKALECFDSSV. Residues 254–274 traverse the membrane as a helical segment; that stretch reads FGAIYYVVFTTLVLLASAILF. Topologically, residues 275-284 are extracellular; the sequence is REWSNVGLVD. A helical transmembrane segment spans residues 285–305; sequence FLGMACGFTTVSVGIVLIQVF. At 306 to 323 the chain is on the cytoplasmic side; it reads KEFNFNLGEMNKSNMKTD.

This sequence belongs to the NIPA family. As to quaternary structure, homodimer. As to expression, widely expressed. Predominantly expressed in neuronal tissues. Brain, heart, kidney, liver and colon (at protein level).

The protein resides in the cell membrane. It is found in the early endosome. The enzyme catalyses Mg(2+)(in) = Mg(2+)(out). In terms of biological role, acts as a Mg(2+) transporter. Can also transport other divalent cations such as Fe(2+), Sr(2+), Ba(2+), Zn(2+) and Co(2+) but to a much less extent than Mg(2+). The polypeptide is Magnesium transporter NIPA1 (Nipa1) (Mus musculus (Mouse)).